A 502-amino-acid chain; its full sequence is Vicilin Jug r 6.0101 (502 aa).

The N-terminal stretch at 1-27 is a signal peptide; the sequence is MAFKPKIPIALLLLTSLLAICAGLALA. The span at 67 to 84 shows a compositional bias: basic and acidic residues; that stretch reads ARERAERRRSEEGSSREE. The disordered stretch occupies residues 67–100; sequence ARERAERRRSEEGSSREEGYEEEELGGEREEENP. A compositionally biased stretch (acidic residues) spans 85–100; sequence GYEEEELGGEREEENP. Cupin type-1 domains lie at 101–259 and 302–475; these read YVFE…DQLE and FNLF…REVE. Residue asparagine 340 is glycosylated (N-linked (GlcNAc...) asparagine). Residues 374 to 401 are disordered; sequence HLSSSGSRGQREGSGSSRRRSRSGPSYQ. Positions 376-389 are enriched in low complexity; that stretch reads SSSGSRGQREGSGS.

Belongs to the 7S seed storage protein family. Homotrimer. N-glycosylated; paucimannose-type structures containing xylose. As to expression, expressed in seed (at protein level).

Seed storage protein. In Juglans regia (English walnut), this protein is Vicilin Jug r 6.0101.